Here is a 209-residue protein sequence, read N- to C-terminus: Large ribosomal subunit protein uL3 (209 aa).

The disordered stretch occupies residues 113-155 (TSRGHGYQGNIKRHHQSRGPETHGSRYHRIPGSMGSIINRVPK).

The protein belongs to the universal ribosomal protein uL3 family. As to quaternary structure, part of the 50S ribosomal subunit. Forms a cluster with proteins L14 and L19.

Its function is as follows. One of the primary rRNA binding proteins, it binds directly near the 3'-end of the 23S rRNA, where it nucleates assembly of the 50S subunit. The sequence is that of Large ribosomal subunit protein uL3 from Lactobacillus delbrueckii subsp. bulgaricus (strain ATCC 11842 / DSM 20081 / BCRC 10696 / JCM 1002 / NBRC 13953 / NCIMB 11778 / NCTC 12712 / WDCM 00102 / Lb 14).